Reading from the N-terminus, the 129-residue chain is Follitropin subunit beta (129 aa).

The signal sequence occupies residues 1-18 (MKSVQFCFLFCCWKAICC). 6 disulfide bridges follow: Cys21/Cys69, Cys35/Cys84, Cys38/Cys122, Cys46/Cys100, Cys50/Cys102, and Cys105/Cys112. 2 N-linked (GlcNAc...) asparagine glycosylation sites follow: Asn25 and Asn42.

Belongs to the glycoprotein hormones subunit beta family. In terms of assembly, heterodimer. The active follitropin is a heterodimer composed of an alpha chain/CGA shared with other hormones and a unique beta chain/FSHB shown here.

It is found in the secreted. In terms of biological role, together with the alpha chain CGA constitutes follitropin, the follicle-stimulating hormone, and provides its biological specificity to the hormone heterodimer. Binds FSHR, a G protein-coupled receptor, on target cells to activate downstream signaling pathways. Follitropin is involved in follicle development and spermatogenesis in reproductive organs. In Oryctolagus cuniculus (Rabbit), this protein is Follitropin subunit beta (FSHB).